The chain runs to 174 residues: Methylated-DNA--protein-cysteine methyltransferase (174 aa).

Cys141 functions as the Nucleophile; methyl group acceptor in the catalytic mechanism.

It belongs to the MGMT family.

It localises to the cytoplasm. The catalysed reaction is a 6-O-methyl-2'-deoxyguanosine in DNA + L-cysteinyl-[protein] = S-methyl-L-cysteinyl-[protein] + a 2'-deoxyguanosine in DNA. The enzyme catalyses a 4-O-methyl-thymidine in DNA + L-cysteinyl-[protein] = a thymidine in DNA + S-methyl-L-cysteinyl-[protein]. Involved in the cellular defense against the biological effects of O6-methylguanine (O6-MeG) and O4-methylthymine (O4-MeT) in DNA. Repairs the methylated nucleobase in DNA by stoichiometrically transferring the methyl group to a cysteine residue in the enzyme. This is a suicide reaction: the enzyme is irreversibly inactivated. The polypeptide is Methylated-DNA--protein-cysteine methyltransferase (Thermococcus kodakarensis (strain ATCC BAA-918 / JCM 12380 / KOD1) (Pyrococcus kodakaraensis (strain KOD1))).